Reading from the N-terminus, the 434-residue chain is Gamma-enolase (434 aa).

Position 2 is an N-acetylserine (Ser2). Lys5 carries the N6-acetyllysine modification. Residue Thr26 is modified to Phosphothreonine. Ser40 serves as a coordination point for Mg(2+). Tyr44 is modified (phosphotyrosine). The residue at position 60 (Lys60) is an N6-acetyllysine; alternate. Position 60 is an N6-succinyllysine; alternate (Lys60). Lys64 carries the post-translational modification N6-acetyllysine. An N6-acetyllysine; alternate modification is found at Lys89. At Lys89 the chain carries N6-succinyllysine; alternate. Residues His158 and Glu167 each contribute to the substrate site. N6-acetyllysine is present on residues Lys193, Lys197, and Lys199. An N6-acetyllysine; alternate modification is found at Lys202. Residue Lys202 forms a Glycyl lysine isopeptide (Lys-Gly) (interchain with G-Cter in SUMO2); alternate linkage. Catalysis depends on Glu210, which acts as the Proton donor. N6-acetyllysine; alternate occurs at positions 228 and 233. Lys228 carries the post-translational modification N6-succinyllysine; alternate. Lys233 is modified (N6-(2-hydroxyisobutyryl)lysine; alternate). A Mg(2+)-binding site is contributed by Asp245. An N6-acetyllysine modification is found at Lys256. Ser263 is subject to Phosphoserine. A Phosphotyrosine modification is found at Tyr287. Ser291 carries the phosphoserine modification. 2 residues coordinate Mg(2+): Glu293 and Asp318. Substrate is bound by residues Glu293 and Asp318. Residues Lys335 and Lys343 each carry the N6-acetyllysine modification. Lys343 (proton acceptor) is an active-site residue. Substrate-binding positions include 370–373 (SHRS) and Lys394. Lys406 carries the N6-acetyllysine modification.

Belongs to the enolase family. In terms of assembly, mammalian enolase is composed of 3 isozyme subunits, alpha, beta and gamma, which can form homodimers or heterodimers which are cell-type and development-specific. It depends on Mg(2+) as a cofactor. In terms of tissue distribution, the alpha/alpha homodimer is expressed in embryo and in most adult tissues. The alpha/beta heterodimer and the beta/beta homodimer are found in striated muscle, and the alpha/gamma heterodimer and the gamma/gamma homodimer in neurons.

It localises to the cytoplasm. Its subcellular location is the cell membrane. The catalysed reaction is (2R)-2-phosphoglycerate = phosphoenolpyruvate + H2O. It participates in carbohydrate degradation; glycolysis; pyruvate from D-glyceraldehyde 3-phosphate: step 4/5. Has neurotrophic and neuroprotective properties on a broad spectrum of central nervous system (CNS) neurons. Binds, in a calcium-dependent manner, to cultured neocortical neurons and promotes cell survival. The chain is Gamma-enolase (ENO2) from Homo sapiens (Human).